Here is a 423-residue protein sequence, read N- to C-terminus: Histidine--tRNA ligase (423 aa).

Belongs to the class-II aminoacyl-tRNA synthetase family. Homodimer.

The protein resides in the cytoplasm. The enzyme catalyses tRNA(His) + L-histidine + ATP = L-histidyl-tRNA(His) + AMP + diphosphate + H(+). This chain is Histidine--tRNA ligase, found in Actinobacillus succinogenes (strain ATCC 55618 / DSM 22257 / CCUG 43843 / 130Z).